The sequence spans 494 residues: Cysteine--tRNA ligase (494 aa).

Zn(2+) is bound at residue Cys29. Positions 31 to 41 (LTVSDDAHLGH) match the 'HIGH' region motif. Residues 187 to 220 (KAGGVSPDDANTHRDDELPPLDGERGQTWASPWG) form a disordered region. A compositionally biased stretch (basic and acidic residues) spans 196–211 (ANTHRDDELPPLDGER). Residues Cys230, His255, and Glu259 each coordinate Zn(2+). A 'KMSKS' region motif is present at residues 287–291 (KMSSS).

This sequence belongs to the class-I aminoacyl-tRNA synthetase family. Requires Zn(2+) as cofactor.

Its subcellular location is the cytoplasm. It catalyses the reaction tRNA(Cys) + L-cysteine + ATP = L-cysteinyl-tRNA(Cys) + AMP + diphosphate. This chain is Cysteine--tRNA ligase, found in Halobacterium salinarum (strain ATCC 700922 / JCM 11081 / NRC-1) (Halobacterium halobium).